The chain runs to 428 residues: Sialidase-3 (428 aa).

The short motif at 24 to 27 (YRIP) is the FRIP motif element. Residues arginine 25 and arginine 45 each coordinate substrate. Catalysis depends on aspartate 50, which acts as the Proton acceptor. Residues 129–140 (IYSQDAGCSWSE) form a BNR 1 repeat. Substrate-binding residues include tyrosine 179 and tyrosine 181. The stretch at 203-214 (IYSDDLGVTWHH) is one BNR 2 repeat. Substrate-binding residues include glutamate 225 and arginine 245. A BNR 3 repeat occupies 254–265 (ALSTDHGEGFQR). The disordered stretch occupies residues 294 to 318 (RCQDSSSKDAPTIQQSSPGSSLRLE). The span at 301 to 313 (KDAPTIQQSSPGS) shows a compositional bias: polar residues. The residue at position 313 (serine 313) is a Phosphoserine. Residue arginine 340 participates in substrate binding. The active-site Nucleophile is the tyrosine 370. Glutamate 387 is a catalytic residue.

It belongs to the glycosyl hydrolase 33 family. As to quaternary structure, interacts with CAV1; this interaction enhances NEU3 sialidase activity within caveola. Interacts with EGFR; this interaction mediates desialylation of EGFR and enhances downstream signaling. In terms of processing, palmitoylated; may regulate intracellular trafficking and anchorage to plasma membrane and endomembranes. As to expression, highly expressed in skeletal muscle, testis, adrenal gland and thymus, followed by pancreas, liver, heart and thymus. Weakly expressed in kidney, placenta, brain and lung.

The protein localises to the cell membrane. It is found in the membrane. Its subcellular location is the caveola. It localises to the early endosome membrane. The protein resides in the recycling endosome membrane. The protein localises to the lysosome membrane. It carries out the reaction Hydrolysis of alpha-(2-&gt;3)-, alpha-(2-&gt;6)-, alpha-(2-&gt;8)- glycosidic linkages of terminal sialic acid residues in oligosaccharides, glycoproteins, glycolipids, colominic acid and synthetic substrates.. The catalysed reaction is a ganglioside GD1a + H2O = a ganglioside GM1 + N-acetylneuraminate. It catalyses the reaction a ganglioside GD1a (d18:1(4E)) + H2O = a ganglioside GM1 (d18:1(4E)) + N-acetylneuraminate. The enzyme catalyses a ganglioside GD1b + H2O = a ganglioside GM1 + N-acetylneuraminate. It carries out the reaction a ganglioside GD1b (d18:1(4E)) + H2O = a ganglioside GM1 (d18:1(4E)) + N-acetylneuraminate. The catalysed reaction is a ganglioside GD3 + H2O = a ganglioside GM3 + N-acetylneuraminate. It catalyses the reaction a ganglioside GD3 (d18:1(4E)) + H2O = a ganglioside GM3 (d18:1(4E)) + N-acetylneuraminate. The enzyme catalyses a ganglioside GM3 + H2O = a beta-D-galactosyl-(1-&gt;4)-beta-D-glucosyl-(1&lt;-&gt;1)-ceramide + N-acetylneuraminate. It carries out the reaction a ganglioside GM1 + H2O = a ganglioside GA1 + N-acetylneuraminate. The catalysed reaction is a ganglioside GM1 (d18:1(4E)) + H2O = a ganglioside GA1 (d18:1(4E)) + N-acetylneuraminate. It catalyses the reaction a ganglioside GM2 (d18:1(4E)) + H2O = a ganglioside GA2 (d18:1(4E)) + N-acetylneuraminate. The enzyme catalyses a ganglioside GM3 (d18:1(4E)) + H2O = a beta-D-Gal-(1-&gt;4)-beta-D-Glc-(1&lt;-&gt;1)-Cer(d18:1(4E)) + N-acetylneuraminate. It carries out the reaction a ganglioside GT1b + H2O = a ganglioside GD1b + N-acetylneuraminate. Its function is as follows. Exo-alpha-sialidase that catalyzes the hydrolytic cleavage of the terminal sialic acid (N-acetylneuraminic acid, Neu5Ac) of a glycan moiety in the catabolism of glycolipids, glycoproteins and oligosacharides. Displays high catalytic efficiency for gangliosides including alpha-(2-&gt;3)-sialylated GD1a and GM3 and alpha-(2-&gt;8)-sialylated GD3. Plays a role in the regulation of transmembrane signaling through the modulation of ganglioside content of the lipid bilayer and by direct interaction with signaling receptors, such as EGFR. Desialylates EGFR and activates downstream signaling in proliferating cells. Contributes to clathrin-mediated endocytosis by regulating sorting of endocytosed receptors to early and recycling endosomes. In Homo sapiens (Human), this protein is Sialidase-3 (NEU3).